A 141-amino-acid polypeptide reads, in one-letter code: MAKKIMGYIKLQIEAGKATPAPPVGPALGQRGVNIMEFTKAFNEKTKDKMGFKVPVVITVFTDKSFTFVVKQPPASALLMHAAGLKGGSSNPLKNKVAKLTQAQLMEIVNRKIEDLNTDDKEAAAKTIAGSARSIGIEIVD.

The protein belongs to the universal ribosomal protein uL11 family. Part of the ribosomal stalk of the 50S ribosomal subunit. Interacts with L10 and the large rRNA to form the base of the stalk. L10 forms an elongated spine to which L12 dimers bind in a sequential fashion forming a multimeric L10(L12)X complex. Post-translationally, one or more lysine residues are methylated.

In terms of biological role, forms part of the ribosomal stalk which helps the ribosome interact with GTP-bound translation factors. The polypeptide is Large ribosomal subunit protein uL11 (Sulfurimonas denitrificans (strain ATCC 33889 / DSM 1251) (Thiomicrospira denitrificans (strain ATCC 33889 / DSM 1251))).